Consider the following 136-residue polypeptide: Large ribosomal subunit protein uL16 (136 aa).

It belongs to the universal ribosomal protein uL16 family. Part of the 50S ribosomal subunit.

Functionally, binds 23S rRNA and is also seen to make contacts with the A and possibly P site tRNAs. This is Large ribosomal subunit protein uL16 from Vibrio atlanticus (strain LGP32) (Vibrio splendidus (strain Mel32)).